The following is a 131-amino-acid chain: Urease subunit beta (131 aa).

Residues 100–131 (PLDPAAGVTSDEDAASAVVPRGAETSEREARA) are disordered.

It belongs to the urease beta subunit family. In terms of assembly, heterotrimer of UreA (gamma), UreB (beta) and UreC (alpha) subunits. Three heterotrimers associate to form the active enzyme.

The protein localises to the cytoplasm. It catalyses the reaction urea + 2 H2O + H(+) = hydrogencarbonate + 2 NH4(+). Its pathway is nitrogen metabolism; urea degradation; CO(2) and NH(3) from urea (urease route): step 1/1. The chain is Urease subunit beta from Kocuria rhizophila (strain ATCC 9341 / DSM 348 / NBRC 103217 / DC2201).